The chain runs to 1657 residues: Ras GTPase-activating-like protein IQGAP1 (1657 aa).

N-acetylserine is present on S2. Position 2 is a phosphoserine (S2). The 116-residue stretch at 44 to 159 folds into the Calponin-homology (CH) domain; sequence LCHLEEAKRW…YCIHALSLYL (116 aa). The residue at position 172 (Y172) is a Phosphotyrosine. S330 carries the post-translational modification Phosphoserine. The WW domain occupies 685 to 710; sequence WVKHWVKGGYHYYHNLETQAGGWAEP. IQ domains follow at residues 745–774, 775–804, 805–834, and 835–864; these read NEGLITKLQACCRGYLVRQEFRSRMNFLKK, QIPAITCIQSQWRGYKQKKAYQDRLAYLHS, HKDEVVKIQSLARMHQARKRYRDRLQYFRD, and HINDIIKIQAFIRANKARDDYKTLINAEDP. Positions 956–1274 are C1; sequence GGLKALSKEK…FFQVACDVPE (319 aa). Residues 1020–1269 form the Ras-GAP domain; that stretch reads YLLLRLFQTA…QKFRRFFQVA (250 aa). Residues 1276 to 1657 form a C2 region; that stretch reads QDKFNVDEYS…FLLNKKFYGK (382 aa). Position 1441 is a phosphoserine (S1441).

In terms of assembly, interacts with CDC42; the interaction is demonstrated with IQGAP1 in GTP-bound and in nucleotide-free state. Interacts with RAC1. Does not interact with RHOA. Interacts with TSG101. Interacts with PAK6. Interacts with SASH1. Interacts with PJVK. Interacts with SLC26A4. This interaction enhances the chloride-bicarbonate exchange activity of SLC26A4. Interacts with SVEP1. Interacts with ILK; the interaction is required for localization of IQGAP to the cell cortex. As to quaternary structure, (Microbial infection) In case of infection, interacts with S.typhimurium protein sseI. In terms of tissue distribution, expressed in the kidney (at protein level).

It is found in the cell membrane. The protein localises to the nucleus. The protein resides in the cytoplasm. Its subcellular location is the cell cortex. It localises to the apical cell membrane. It is found in the basolateral cell membrane. Functionally, plays a crucial role in regulating the dynamics and assembly of the actin cytoskeleton. Recruited to the cell cortex by interaction with ILK which allows it to cooperate with its effector DIAPH1 to locally stabilize microtubules and allow stable insertion of caveolae into the plasma membrane. Binds to activated CDC42 but does not stimulate its GTPase activity. Associates with calmodulin. May promote neurite outgrowth. May play a possible role in cell cycle regulation by contributing to cell cycle progression after DNA replication arrest. The chain is Ras GTPase-activating-like protein IQGAP1 (Iqgap1) from Mus musculus (Mouse).